The primary structure comprises 667 residues: DNA ligase (667 aa).

NAD(+) is bound by residues 32-36, 81-82, and glutamate 110; these read DSEYD and SL. Lysine 112 (N6-AMP-lysine intermediate) is an active-site residue. 4 residues coordinate NAD(+): arginine 133, glutamate 167, lysine 283, and lysine 307. Residues cysteine 401, cysteine 404, cysteine 419, and cysteine 424 each coordinate Zn(2+). A BRCT domain is found at 586–667; sequence EGHPEFSGKT…FVDKQNELNS (82 aa).

This sequence belongs to the NAD-dependent DNA ligase family. LigA subfamily. Mg(2+) serves as cofactor. Requires Mn(2+) as cofactor.

It carries out the reaction NAD(+) + (deoxyribonucleotide)n-3'-hydroxyl + 5'-phospho-(deoxyribonucleotide)m = (deoxyribonucleotide)n+m + AMP + beta-nicotinamide D-nucleotide.. Its function is as follows. DNA ligase that catalyzes the formation of phosphodiester linkages between 5'-phosphoryl and 3'-hydroxyl groups in double-stranded DNA using NAD as a coenzyme and as the energy source for the reaction. It is essential for DNA replication and repair of damaged DNA. The chain is DNA ligase from Staphylococcus aureus (strain MRSA252).